Here is a 480-residue protein sequence, read N- to C-terminus: Chromosomal replication initiator protein DnaA (480 aa).

Positions 1 to 71 (MNLTKVWNTT…REQLGSVVGF (71 aa)) are domain I, interacts with DnaA modulators. The segment at 71–139 (FPVDVRIVLA…LELHRAVRSS (69 aa)) is domain II. Residues 91–115 (SINGRHAARDTRKSDHHAPLSGGYG) are disordered. Positions 97-108 (AARDTRKSDHHA) are enriched in basic and acidic residues. A domain III, AAA+ region region spans residues 140-356 (MLNPRYTFDR…GCLNRVTAYA (217 aa)). ATP-binding residues include G184, G186, K187, and T188. Residues 357–480 (QMYNIPVTIE…IRERLMNSAV (124 aa)) are domain IV, binds dsDNA.

This sequence belongs to the DnaA family. In terms of assembly, oligomerizes as a right-handed, spiral filament on DNA at oriC.

It is found in the cytoplasm. In terms of biological role, plays an essential role in the initiation and regulation of chromosomal replication. ATP-DnaA binds to the origin of replication (oriC) to initiate formation of the DNA replication initiation complex once per cell cycle. Binds the DnaA box (a 9 base pair repeat at the origin) and separates the double-stranded (ds)DNA. Forms a right-handed helical filament on oriC DNA; dsDNA binds to the exterior of the filament while single-stranded (ss)DNA is stabiized in the filament's interior. The ATP-DnaA-oriC complex binds and stabilizes one strand of the AT-rich DNA unwinding element (DUE), permitting loading of DNA polymerase. After initiation quickly degrades to an ADP-DnaA complex that is not apt for DNA replication. Binds acidic phospholipids. The protein is Chromosomal replication initiator protein DnaA of Roseiflexus castenholzii (strain DSM 13941 / HLO8).